The chain runs to 89 residues: MTMGFVEYARKIIDGEPRKDDMREALAESFDLFTRDAHWRIAPYLRLKTHEIVPNHVLVYTDTYVLGKFTLPVTDQVLPEGYWALTAKE.

This is an uncharacterized protein from Treponema pallidum (strain Nichols).